The primary structure comprises 218 residues: MSENEIKGILGTKLGMTQIFDEENRVIPVTVVEAGPCVVSQIRTVETDGYNAIQIAYGEIDPRKVNQPLTGHFKKAGVTPRRHVTEIRMDDVSGYEVGQDVTVEIFNDIKFVDVTGTTKGKGYAGAMKRHGFAGQGAGHGNQAAHRRVGGIGAAATPGRIFKGKRMAGRMGNDRVTTQNLKVQKIDADANIILIKGAIPGNRGGIVTVKTAVKGGAHA.

The protein belongs to the universal ribosomal protein uL3 family. As to quaternary structure, part of the 50S ribosomal subunit. Forms a cluster with proteins L14 and L19.

One of the primary rRNA binding proteins, it binds directly near the 3'-end of the 23S rRNA, where it nucleates assembly of the 50S subunit. The sequence is that of Large ribosomal subunit protein uL3 from Corynebacterium glutamicum (strain R).